The primary structure comprises 85 residues: MQMAYWVMVMMMVGITAPLSEGRKLNDAIRGLVPNDLTPQLLQSLVSRRHRVFHLDNTYLKIPICAWKVCPPTPWRRRDLKKRNK.

An N-terminal signal peptide occupies residues 1–22 (MQMAYWVMVMMMVGITAPLSEG). A propeptide spanning residues 23 to 61 (RKLNDAIRGLVPNDLTPQLLQSLVSRRHRVFHLDNTYLK) is cleaved from the precursor. Residues C65 and C70 are joined by a disulfide bond. The propeptide occupies 76–85 (RRRDLKKRNK).

It belongs to the conotoxin C superfamily. As to expression, expressed by the venom duct.

It localises to the secreted. Acts as an agonist of neurotensin receptors. It binds to human neurotensin type 1 receptor (NTSR1), rat neurotensin types 1 and 2 receptors (NTSR1/NTSR2) and mouse neurotensin type 3 receptor (SORT1). The chain is Contulakin-Lt2 from Conus litteratus (Lettered cone).